The sequence spans 424 residues: UPF0053 protein MG146 (424 aa).

In terms of domain architecture, CNNM transmembrane spans 6-191; the sequence is SGLTLTVIIL…EQNGLFSKED (186 aa). The next 4 helical transmembrane spans lie at 7–27, 71–91, 101–121, and 135–155; these read GLTL…STVV, LITI…ILFL, LLSS…FCEI, and LVLF…ITKL. CBS domains lie at 210–270 and 272–332; these read MIKW…PKSL and LNQL…IYDE.

It belongs to the UPF0053 family.

It is found in the cell membrane. In Mycoplasma genitalium (strain ATCC 33530 / DSM 19775 / NCTC 10195 / G37) (Mycoplasmoides genitalium), this protein is UPF0053 protein MG146.